Here is a 219-residue protein sequence, read N- to C-terminus: Vesicle-associated membrane protein 712 (219 aa).

Topologically, residues 1–189 (MSILYALVAR…NNTVWWRNCK (189 aa)) are cytoplasmic. The region spanning 7-111 (LVARGTVVLA…AMNDEFSRVL (105 aa)) is the Longin domain. Positions 126-186 (TISRIKGEMN…RRFNNTVWWR (61 aa)) constitute a v-SNARE coiled-coil homology domain. The chain crosses the membrane as a helical; Anchor for type IV membrane protein span at residues 190–210 (LTLLLILVLLVIIYIGVAFAC). Topologically, residues 211-219 (HGPTLPSCV) are vesicular.

It belongs to the synaptobrevin family. Expressed in flowers, leaves, stems and roots.

Its subcellular location is the vacuole membrane. The protein resides in the prevacuolar compartment membrane. In terms of biological role, involved in the targeting and/or fusion of transport vesicles to their target membrane. The chain is Vesicle-associated membrane protein 712 from Arabidopsis thaliana (Mouse-ear cress).